Here is a 143-residue protein sequence, read N- to C-terminus: Transcriptional regulator MraZ (143 aa).

2 SpoVT-AbrB domains span residues 5 to 47 (THTP…PRAE) and 76 to 119 (TDEQ…DAQA).

Belongs to the MraZ family. As to quaternary structure, forms oligomers.

The protein localises to the cytoplasm. It is found in the nucleoid. The chain is Transcriptional regulator MraZ from Mycobacterium leprae (strain Br4923).